Consider the following 414-residue polypeptide: Acyltransferase MYCGRDRAFT_85486 (414 aa).

The span at 16 to 25 (DGTSTVTIRP) shows a compositional bias: polar residues. The segment at 16–47 (DGTSTVTIRPTQKAAPSEEPSQDTAPSKKDSN) is disordered. Residue H329 participates in substrate binding. The active-site Proton acceptor is the E367.

It belongs to the lysine N-acyltransferase mbtK family.

It functions in the pathway siderophore biosynthesis. Acyltransferase; part of the gene cluster 14 that mediates the biosynthesis of a ferrichrome A-like siderophore which may contribute to organismal virulence. The first step of siderophore biosynthesis is performed by the HMG-CoA synthase (HMGS) MYCGRDRAFT_54740 which catalyzes the generation of HMG-CoA and CoA using acetoacetyl-CoA and acetyl-CoA as substrates. The enoyl-CoA isomerase/hydratase MYCGRDRAFT_76805 then catalyzes the conversion of HMG-CoA to methylglutaconyl-CoA. The acyltransferase MYCGRDRAFT_85486 then fuses methylglutaconyl-CoA with hydroxyornithine to yield methylglutaconyl hydroxyornithine. Methylglutaconyl hydroxyornithine is then available for use by the nonribosomal peptide synthetase NRPS2 to generate the ferrichrome A-like siderophore. This is Acyltransferase MYCGRDRAFT_85486 from Zymoseptoria tritici (strain CBS 115943 / IPO323) (Speckled leaf blotch fungus).